Here is a 94-residue protein sequence, read N- to C-terminus: Aspartyl/glutamyl-tRNA(Asn/Gln) amidotransferase subunit C (94 aa).

This sequence belongs to the GatC family. In terms of assembly, heterotrimer of A, B and C subunits.

The catalysed reaction is L-glutamyl-tRNA(Gln) + L-glutamine + ATP + H2O = L-glutaminyl-tRNA(Gln) + L-glutamate + ADP + phosphate + H(+). It carries out the reaction L-aspartyl-tRNA(Asn) + L-glutamine + ATP + H2O = L-asparaginyl-tRNA(Asn) + L-glutamate + ADP + phosphate + 2 H(+). Allows the formation of correctly charged Asn-tRNA(Asn) or Gln-tRNA(Gln) through the transamidation of misacylated Asp-tRNA(Asn) or Glu-tRNA(Gln) in organisms which lack either or both of asparaginyl-tRNA or glutaminyl-tRNA synthetases. The reaction takes place in the presence of glutamine and ATP through an activated phospho-Asp-tRNA(Asn) or phospho-Glu-tRNA(Gln). The protein is Aspartyl/glutamyl-tRNA(Asn/Gln) amidotransferase subunit C of Desulfitobacterium hafniense (strain DSM 10664 / DCB-2).